The chain runs to 566 residues: Mucolipin-2 (566 aa).

At 1 to 65 (MARQPYRFPQ…YRARRQIPWK (65 aa)) the chain is on the cytoplasmic side. A helical transmembrane segment spans residues 66–86 (LGLQILKIVMVTTQLVRFGLS). The Extracellular portion of the chain corresponds to 87–288 (NQLVVAFKED…IFGSTQKNAQ (202 aa)). The extracellular/lumenal pore loop stretch occupies residues 107 to 123 (KGYSGTDEDDYSCSVYT). Disulfide bonds link Cys164–Cys190 and Cys243–Cys274. A helical membrane pass occupies residues 289–309 (YVLVFDAFVIVICLASLILCT). Residues 310–346 (RSIVLALRLRKRFLNFFLEKYKRPVCDTDQWEFINGW) lie on the Cytoplasmic side of the membrane. A helical transmembrane segment spans residues 347–367 (YVLVIISDLMTIIGSILKMEI). At 368–376 (KAKNLTNYD) the chain is on the extracellular side. Residues 377 to 397 (LCSIFLGTSTLLVWVGVIRYL) traverse the membrane as a helical segment. Topologically, residues 398–419 (GYFQAYNVLILTMQASLPKVLR) are cytoplasmic. A helical transmembrane segment spans residues 420–440 (FCACAGMIYLGYTFCGWIVLG). Over 441-448 (PYHDKFEN) the chain is Extracellular. An intramembrane region (pore-forming) is located at residues 449-469 (LNTVAECLFSLVNGDDMFATF). The Selectivity filter motif lies at 461-464 (NGDD). Over 470–480 (AQIQQKSILVW) the chain is Extracellular. A helical transmembrane segment spans residues 481 to 502 (LFSRLYLYSFISLFIYMILSLF). Residues 503-566 (IALITDSYDT…RSDDHLIPIS (64 aa)) are Cytoplasmic-facing.

Belongs to the transient receptor (TC 1.A.4) family. Polycystin subfamily. MCOLN2 sub-subfamily. In terms of assembly, forms homooligomeric complexes; probably tetrameric. Can heterooligomerize with MCOLN1; heteromeric assemblies have different channel properties as compared to the respective homooligomers and may be tissue-specific. Interacts with TMEM176A.

The protein localises to the cell membrane. It is found in the late endosome membrane. Its subcellular location is the lysosome membrane. The protein resides in the recycling endosome membrane. The enzyme catalyses Ca(2+)(in) = Ca(2+)(out). It carries out the reaction Fe(2+)(in) = Fe(2+)(out). Channel activity is reduced by low extracellular/lumenal pH level. Its function is as follows. Nonselective cation channel probably playing a role in the regulation of membrane trafficking events. Acts as a Ca(2+)-permeable cation channel with inwardly rectifying activity. May activate ARF6 and be involved in the trafficking of GPI-anchored cargo proteins to the cell surface via the ARF6-regulated recycling pathway. May play a role in immune processes. In adaptive immunity, TRPML2 and TRPML1 may play redundant roles in the function of the specialized lysosomes of B cells. In the innate immune response, may play a role in the regulation of chemokine secretion and macrophage migration. Through a possible and probably tissue-specific heteromerization with MCOLN1 may be at least in part involved in many lysosome-dependent cellular events. Also functions as a Fe(2+) permeable channel. This Homo sapiens (Human) protein is Mucolipin-2.